The chain runs to 146 residues: Large ribosomal subunit protein uL15 (146 aa).

The segment covering Met-1–Arg-18 has biased composition (basic and acidic residues). A disordered region spans residues Met-1–Phe-50. The segment covering Arg-21–Ser-31 has biased composition (gly residues).

It belongs to the universal ribosomal protein uL15 family. As to quaternary structure, part of the 50S ribosomal subunit.

Binds to the 23S rRNA. In Listeria innocua serovar 6a (strain ATCC BAA-680 / CLIP 11262), this protein is Large ribosomal subunit protein uL15.